Consider the following 192-residue polypeptide: Fe/S biogenesis protein NfuA (192 aa).

[4Fe-4S] cluster-binding residues include C149 and C152.

It belongs to the NfuA family. As to quaternary structure, homodimer. [4Fe-4S] cluster serves as cofactor.

Involved in iron-sulfur cluster biogenesis. Binds a 4Fe-4S cluster, can transfer this cluster to apoproteins, and thereby intervenes in the maturation of Fe/S proteins. Could also act as a scaffold/chaperone for damaged Fe/S proteins. This Aeromonas hydrophila subsp. hydrophila (strain ATCC 7966 / DSM 30187 / BCRC 13018 / CCUG 14551 / JCM 1027 / KCTC 2358 / NCIMB 9240 / NCTC 8049) protein is Fe/S biogenesis protein NfuA.